A 353-amino-acid polypeptide reads, in one-letter code: Quinolinate synthase (353 aa).

Residues His47 and Ser68 each contribute to the iminosuccinate site. Cys113 serves as a coordination point for [4Fe-4S] cluster. Residues 139 to 141 (YAN) and Ser156 contribute to the iminosuccinate site. Cys200 lines the [4Fe-4S] cluster pocket. Residues 226-228 (HPE) and Thr243 each bind iminosuccinate. Residue Cys297 coordinates [4Fe-4S] cluster.

This sequence belongs to the quinolinate synthase family. Type 1 subfamily. Requires [4Fe-4S] cluster as cofactor.

The protein localises to the cytoplasm. It carries out the reaction iminosuccinate + dihydroxyacetone phosphate = quinolinate + phosphate + 2 H2O + H(+). It participates in cofactor biosynthesis; NAD(+) biosynthesis; quinolinate from iminoaspartate: step 1/1. Its function is as follows. Catalyzes the condensation of iminoaspartate with dihydroxyacetone phosphate to form quinolinate. In Vibrio vulnificus (strain CMCP6), this protein is Quinolinate synthase.